The sequence spans 502 residues: uncharacterized protein (502 aa).

This is an uncharacterized protein from Agrobacterium vitis (Rhizobium vitis).